We begin with the raw amino-acid sequence, 265 residues long: GTP cyclohydrolase FolE2 (265 aa).

This sequence belongs to the GTP cyclohydrolase IV family.

It carries out the reaction GTP + H2O = 7,8-dihydroneopterin 3'-triphosphate + formate + H(+). Its pathway is cofactor biosynthesis; 7,8-dihydroneopterin triphosphate biosynthesis; 7,8-dihydroneopterin triphosphate from GTP: step 1/1. Converts GTP to 7,8-dihydroneopterin triphosphate. In Bordetella avium (strain 197N), this protein is GTP cyclohydrolase FolE2.